Consider the following 172-residue polypeptide: Envelope protein UL45 (172 aa).

Topologically, residues 1 to 27 (MPLRASEHAYRPLGPGTPPMRARLPAA) are intravirion. Residues 28–48 (AWVGVGTIIGGVVIIAALVLV) traverse the membrane as a helical; Signal-anchor for type II membrane protein segment. Over 49–172 (PSRASWALSP…TSTRNALGLP (124 aa)) the chain is Virion surface.

The protein belongs to the herpesviridae HHV-1 UL45 family.

It localises to the virion membrane. Its function is as follows. Important virulence factor of HSV neurotropism. Seems to be required for glycoprotein B-induced fusion. Dispensable for growth in vitro. The polypeptide is Envelope protein UL45 (Human herpesvirus 1 (strain KOS) (HHV-1)).